Here is a 285-residue protein sequence, read N- to C-terminus: Tryptophan synthase alpha chain (285 aa).

Active-site proton acceptor residues include Glu-53 and Asp-64.

The protein belongs to the TrpA family. In terms of assembly, tetramer of two alpha and two beta chains.

The catalysed reaction is (1S,2R)-1-C-(indol-3-yl)glycerol 3-phosphate + L-serine = D-glyceraldehyde 3-phosphate + L-tryptophan + H2O. It participates in amino-acid biosynthesis; L-tryptophan biosynthesis; L-tryptophan from chorismate: step 5/5. Functionally, the alpha subunit is responsible for the aldol cleavage of indoleglycerol phosphate to indole and glyceraldehyde 3-phosphate. The sequence is that of Tryptophan synthase alpha chain from Bordetella parapertussis (strain 12822 / ATCC BAA-587 / NCTC 13253).